The chain runs to 686 residues: DNA ligase (686 aa).

NAD(+) is bound by residues 45–49, 94–95, and Glu-127; these read DNEYD and SL. The N6-AMP-lysine intermediate role is filled by Lys-129. Residues Arg-150, Glu-187, Lys-302, and Lys-326 each coordinate NAD(+). Zn(2+)-binding residues include Cys-420, Cys-423, Cys-438, and Cys-444. Residues 605 to 686 form the BRCT domain; it reads LDNLPLEGQT…DEFLKMIGAS (82 aa).

It belongs to the NAD-dependent DNA ligase family. LigA subfamily. It depends on Mg(2+) as a cofactor. Mn(2+) is required as a cofactor.

It carries out the reaction NAD(+) + (deoxyribonucleotide)n-3'-hydroxyl + 5'-phospho-(deoxyribonucleotide)m = (deoxyribonucleotide)n+m + AMP + beta-nicotinamide D-nucleotide.. In terms of biological role, DNA ligase that catalyzes the formation of phosphodiester linkages between 5'-phosphoryl and 3'-hydroxyl groups in double-stranded DNA using NAD as a coenzyme and as the energy source for the reaction. It is essential for DNA replication and repair of damaged DNA. The protein is DNA ligase of Psychrobacter sp. (strain PRwf-1).